A 220-amino-acid polypeptide reads, in one-letter code: Deoxyribose-phosphate aldolase (220 aa).

Aspartate 89 (proton donor/acceptor) is an active-site residue. Lysine 151 functions as the Schiff-base intermediate with acetaldehyde in the catalytic mechanism. Lysine 180 functions as the Proton donor/acceptor in the catalytic mechanism.

The protein belongs to the DeoC/FbaB aldolase family. DeoC type 1 subfamily.

Its subcellular location is the cytoplasm. The catalysed reaction is 2-deoxy-D-ribose 5-phosphate = D-glyceraldehyde 3-phosphate + acetaldehyde. The protein operates within carbohydrate degradation; 2-deoxy-D-ribose 1-phosphate degradation; D-glyceraldehyde 3-phosphate and acetaldehyde from 2-deoxy-alpha-D-ribose 1-phosphate: step 2/2. Its function is as follows. Catalyzes a reversible aldol reaction between acetaldehyde and D-glyceraldehyde 3-phosphate to generate 2-deoxy-D-ribose 5-phosphate. In Streptococcus mutans serotype c (strain ATCC 700610 / UA159), this protein is Deoxyribose-phosphate aldolase.